We begin with the raw amino-acid sequence, 443 residues long: Histone deacetylase 10, chloroplastic (443 aa).

A chloroplast-targeting transit peptide spans 1–65; the sequence is MEQLWVPSLP…PSHNGTSISD (65 aa). The histone deacetylase stretch occupies residues 82–412; sequence DAHILYCTSP…FRAFLGEPSL (331 aa). His-222 functions as the Proton donor/acceptor in the catalytic mechanism. Residues Asp-259, His-261, and Asp-346 each contribute to the Zn(2+) site.

The protein belongs to the histone deacetylase family. Zn(2+) is required as a cofactor. In terms of tissue distribution, expressed in leaves. Expressed in coleoptiles, leaves, flag leaves and flowers. Expressed at low levels in roots.

The protein resides in the plastid. Its subcellular location is the chloroplast. It localises to the mitochondrion. It catalyses the reaction N-acetylserotonin + H2O = serotonin + acetate. The enzyme catalyses N-acetyltyramine + H2O = tyramine + acetate. The catalysed reaction is N-acetyltryptamine + H2O = tryptamine + acetate. It carries out the reaction melatonin + H2O = 5-methoxytryptamine + acetate. The activity of this enzyme is not inhibited by butyrate, a well-known histone deacetylase inhibitor. In terms of biological role, involved in the regulation of melatonin biosynthesis by catalyzing the deacetylation of N-acetylserotonin to produce serotonin. N-acetylserotonin is methylated by acetylserotonin O-methyltransferase (ASMT) to produce melatonin (N-acetyl-5-methoxytryptamine). Deacetylates melatonin to produce 5-methoxytryptamine. In vitro, deacetylates N-acetyltyramine and N-acetyltryptamine to produce tyramine and tryptamine, respectively. The protein is Histone deacetylase 10, chloroplastic of Oryza sativa subsp. japonica (Rice).